Reading from the N-terminus, the 399-residue chain is Chorismate synthase (399 aa).

Positions 40 and 46 each coordinate NADP(+). Residues 135-137 (RAS), 256-257 (QA), G301, 316-320 (KPIAT), and R342 contribute to the FMN site.

The protein belongs to the chorismate synthase family. In terms of assembly, homotetramer. It depends on FMNH2 as a cofactor.

It carries out the reaction 5-O-(1-carboxyvinyl)-3-phosphoshikimate = chorismate + phosphate. Its pathway is metabolic intermediate biosynthesis; chorismate biosynthesis; chorismate from D-erythrose 4-phosphate and phosphoenolpyruvate: step 7/7. Functionally, catalyzes the anti-1,4-elimination of the C-3 phosphate and the C-6 proR hydrogen from 5-enolpyruvylshikimate-3-phosphate (EPSP) to yield chorismate, which is the branch point compound that serves as the starting substrate for the three terminal pathways of aromatic amino acid biosynthesis. This reaction introduces a second double bond into the aromatic ring system. The chain is Chorismate synthase from Pseudarthrobacter chlorophenolicus (strain ATCC 700700 / DSM 12829 / CIP 107037 / JCM 12360 / KCTC 9906 / NCIMB 13794 / A6) (Arthrobacter chlorophenolicus).